Here is a 635-residue protein sequence, read N- to C-terminus: Glutamyl-tRNA(Gln) amidotransferase subunit E (635 aa).

Positions 415-437 are disordered; that stretch reads LPDGNTEYMRPLPGKARMYPETD.

Belongs to the GatB/GatE family. GatE subfamily. As to quaternary structure, heterodimer of GatD and GatE.

The enzyme catalyses L-glutamyl-tRNA(Gln) + L-glutamine + ATP + H2O = L-glutaminyl-tRNA(Gln) + L-glutamate + ADP + phosphate + H(+). Allows the formation of correctly charged Gln-tRNA(Gln) through the transamidation of misacylated Glu-tRNA(Gln) in organisms which lack glutaminyl-tRNA synthetase. The reaction takes place in the presence of glutamine and ATP through an activated gamma-phospho-Glu-tRNA(Gln). The GatDE system is specific for glutamate and does not act on aspartate. The protein is Glutamyl-tRNA(Gln) amidotransferase subunit E of Pyrococcus horikoshii (strain ATCC 700860 / DSM 12428 / JCM 9974 / NBRC 100139 / OT-3).